A 71-amino-acid polypeptide reads, in one-letter code: NAD(P)H-quinone oxidoreductase subunit O (71 aa).

The protein belongs to the complex I NdhO subunit family. In terms of assembly, NDH-1 can be composed of about 15 different subunits; different subcomplexes with different compositions have been identified which probably have different functions.

The protein resides in the cellular thylakoid membrane. The catalysed reaction is a plastoquinone + NADH + (n+1) H(+)(in) = a plastoquinol + NAD(+) + n H(+)(out). It catalyses the reaction a plastoquinone + NADPH + (n+1) H(+)(in) = a plastoquinol + NADP(+) + n H(+)(out). Functionally, NDH-1 shuttles electrons from an unknown electron donor, via FMN and iron-sulfur (Fe-S) centers, to quinones in the respiratory and/or the photosynthetic chain. The immediate electron acceptor for the enzyme in this species is believed to be plastoquinone. Couples the redox reaction to proton translocation, and thus conserves the redox energy in a proton gradient. Cyanobacterial NDH-1 also plays a role in inorganic carbon-concentration. The sequence is that of NAD(P)H-quinone oxidoreductase subunit O from Picosynechococcus sp. (strain ATCC 27264 / PCC 7002 / PR-6) (Agmenellum quadruplicatum).